A 474-amino-acid polypeptide reads, in one-letter code: MAKEISSELLNTILTRVGGPGNIASCGNCMTRLRLGVHDSSLVDPDIKTLEGVKGVILTSDQVQVVFGPGKAHRAAKAMSELLGEAPVQDAAEIAAQNKRQLKAKQTSGVQQFLAKFATIFTPLIPGFIAAGLLLGIATLIATVMHVPADAQGTLPDALNFMKVFSKGLFTFLVILVGYNAAQAFGGTGVNGAIIAALFLLGYNPAATTGYYAGFHDFFGLPIDPRGNIIGVLIAAWACARIEGMVRRFMPDDLDMLLTSLITLLITATLAYLIIMPLGGWLFEGMSWLFMHLNSNPLGCAVLAGLFLIAVVFGVHQGFIPVYLALMDSQGFNSLFPILSMAGAGQVGAALALYWRAQPHSALRSQVRGAIIPGLLGVGEPLIYGVTLPRMKPFITACLGGAAGGLFIGLIAWWGLPMGLNSAFGPSGLVALPLMTSAQGILPAMAVYAGGILVAWVCGFIFTTLFGCRNVNLD.

The PTS EIIB type-1 domain maps to Met-1–Gln-89. Over Met-1–Pro-123 the chain is Cytoplasmic. The active-site Phosphocysteine intermediate; for EIIB activity is Cys-29. Residues Ala-115 to Asp-474 enclose the PTS EIIC type-1 domain. The helical transmembrane segment at Leu-124–Val-144 threads the bilayer. Topologically, residues Met-145–Asp-157 are periplasmic. The helical transmembrane segment at Ala-158–Gly-178 threads the bilayer. The Cytoplasmic portion of the chain corresponds to Tyr-179–Asn-180. The chain crosses the membrane as a helical span at residues Ala-181–Leu-201. The Periplasmic segment spans residues Gly-202–Asp-217. The chain crosses the membrane as a helical span at residues Phe-218–Ala-238. Topologically, residues Cys-239–Ser-260 are cytoplasmic. Residues Leu-261 to Trp-281 form a helical membrane-spanning segment. At Leu-282–Ala-301 the chain is on the periplasmic side. Residues Val-302–Val-322 traverse the membrane as a helical segment. Topologically, residues Tyr-323–Ser-334 are cytoplasmic. A helical membrane pass occupies residues Leu-335–Trp-355. Over Arg-356–Arg-368 the chain is Periplasmic. The helical transmembrane segment at Gly-369 to Pro-389 threads the bilayer. Residues Arg-390–Pro-393 lie on the Cytoplasmic side of the membrane. The helical transmembrane segment at Phe-394 to Trp-414 threads the bilayer. The Periplasmic portion of the chain corresponds to Gly-415–Gly-440. Residues Ile-441 to Ile-461 traverse the membrane as a helical segment. Residues Phe-462 to Asp-474 lie on the Cytoplasmic side of the membrane.

It is found in the cell inner membrane. It carries out the reaction N-acetyl-beta-D-muramate(out) + N(pros)-phospho-L-histidyl-[protein] = N-acetyl-beta-D-muramate 6-phosphate(in) + L-histidyl-[protein]. Its function is as follows. The phosphoenolpyruvate-dependent sugar phosphotransferase system (sugar PTS), a major carbohydrate active transport system, catalyzes the phosphorylation of incoming sugar substrates concomitantly with their translocation across the cell membrane. This system is involved in N-acetylmuramic acid (MurNAc) transport, yielding cytoplasmic MurNAc-6-P. Is also able to take up anhydro-N-acetylmuramic acid (anhMurNAc), but cannot phosphorylate the carbon 6, probably because of the 1,6-anhydro ring. This Escherichia coli O157:H7 protein is PTS system N-acetylmuramic acid-specific EIIBC component (murP).